Consider the following 220-residue polypeptide: Translation initiation factor 6 (220 aa).

Belongs to the eIF-6 family.

Its function is as follows. Binds to the 50S ribosomal subunit and prevents its association with the 30S ribosomal subunit to form the 70S initiation complex. In Halobacterium salinarum (strain ATCC 29341 / DSM 671 / R1), this protein is Translation initiation factor 6.